Reading from the N-terminus, the 141-residue chain is Nucleoside diphosphate kinase (141 aa).

Lys9, Phe57, Arg85, Thr91, Arg102, and Asn112 together coordinate ATP. The active-site Pros-phosphohistidine intermediate is His115.

Belongs to the NDK family. Homotetramer. Mg(2+) serves as cofactor.

It localises to the cytoplasm. It catalyses the reaction a 2'-deoxyribonucleoside 5'-diphosphate + ATP = a 2'-deoxyribonucleoside 5'-triphosphate + ADP. The catalysed reaction is a ribonucleoside 5'-diphosphate + ATP = a ribonucleoside 5'-triphosphate + ADP. Major role in the synthesis of nucleoside triphosphates other than ATP. The ATP gamma phosphate is transferred to the NDP beta phosphate via a ping-pong mechanism, using a phosphorylated active-site intermediate. The polypeptide is Nucleoside diphosphate kinase (Chloroherpeton thalassium (strain ATCC 35110 / GB-78)).